The sequence spans 173 residues: Protein GrpE (173 aa).

Belongs to the GrpE family. As to quaternary structure, homodimer.

It localises to the cytoplasm. In terms of biological role, participates actively in the response to hyperosmotic and heat shock by preventing the aggregation of stress-denatured proteins, in association with DnaK and GrpE. It is the nucleotide exchange factor for DnaK and may function as a thermosensor. Unfolded proteins bind initially to DnaJ; upon interaction with the DnaJ-bound protein, DnaK hydrolyzes its bound ATP, resulting in the formation of a stable complex. GrpE releases ADP from DnaK; ATP binding to DnaK triggers the release of the substrate protein, thus completing the reaction cycle. Several rounds of ATP-dependent interactions between DnaJ, DnaK and GrpE are required for fully efficient folding. The polypeptide is Protein GrpE (Campylobacter fetus subsp. fetus (strain 82-40)).